The chain runs to 97 residues: Ribosomal biogenesis factor (97 aa).

The residue at position 19 (Ser-19) is a Phosphoserine. At Lys-21 the chain carries N6-acetyllysine. Ser-69 is modified (phosphoserine).

As to quaternary structure, associates with the pre-60S ribosomal particles.

It localises to the nucleus. Its subcellular location is the nucleolus. In terms of biological role, trans-acting factor in ribosome biogenesis required for efficient 40S and 60S subunit production. This chain is Ribosomal biogenesis factor (Rbis), found in Mus musculus (Mouse).